The chain runs to 100 residues: MQLTPREVEKLMIYTLSDVAFKRKARGLKLNYPEAVSIITVTAMEGARDGKSVEDVMKEASQVLTKDDVMDGVADLIPNVQVEAIFTDGSRLVTVHDPIK.

It belongs to the urease gamma subunit family. As to quaternary structure, heterotrimer of UreA (gamma), UreB (beta) and UreC (alpha) subunits. Three heterotrimers associate to form the active enzyme.

It localises to the cytoplasm. It carries out the reaction urea + 2 H2O + H(+) = hydrogencarbonate + 2 NH4(+). Its pathway is nitrogen metabolism; urea degradation; CO(2) and NH(3) from urea (urease route): step 1/1. This Yersinia aldovae protein is Urease subunit gamma.